Reading from the N-terminus, the 269-residue chain is NAD kinase (269 aa).

The active-site Proton acceptor is the Asp-45. NAD(+)-binding positions include 45–46 (DG), 122–123 (NE), Arg-149, Asp-151, and Ala-186.

The protein belongs to the NAD kinase family. A divalent metal cation is required as a cofactor.

Its subcellular location is the cytoplasm. The enzyme catalyses NAD(+) + ATP = ADP + NADP(+) + H(+). Involved in the regulation of the intracellular balance of NAD and NADP, and is a key enzyme in the biosynthesis of NADP. Catalyzes specifically the phosphorylation on 2'-hydroxyl of the adenosine moiety of NAD to yield NADP. This Staphylococcus saprophyticus subsp. saprophyticus (strain ATCC 15305 / DSM 20229 / NCIMB 8711 / NCTC 7292 / S-41) protein is NAD kinase.